Reading from the N-terminus, the 107-residue chain is UPF0122 protein STH1464 (107 aa).

This sequence belongs to the UPF0122 family.

Might take part in the signal recognition particle (SRP) pathway. This is inferred from the conservation of its genetic proximity to ftsY/ffh. May be a regulatory protein. The sequence is that of UPF0122 protein STH1464 from Symbiobacterium thermophilum (strain DSM 24528 / JCM 14929 / IAM 14863 / T).